Reading from the N-terminus, the 361-residue chain is Mannose-1-phosphate guanyltransferase 2 (361 aa).

The protein belongs to the transferase hexapeptide repeat family.

The protein resides in the cytoplasm. The catalysed reaction is alpha-D-mannose 1-phosphate + GTP + H(+) = GDP-alpha-D-mannose + diphosphate. It participates in nucleotide-sugar biosynthesis; GDP-alpha-D-mannose biosynthesis; GDP-alpha-D-mannose from alpha-D-mannose 1-phosphate (GTP route): step 1/1. Functionally, involved in cell wall synthesis where it is required for glycosylation. Involved in cell cycle progression through cell-size checkpoint. The polypeptide is Mannose-1-phosphate guanyltransferase 2 (MPG1) (Candida glabrata (strain ATCC 2001 / BCRC 20586 / JCM 3761 / NBRC 0622 / NRRL Y-65 / CBS 138) (Yeast)).